Reading from the N-terminus, the 69-residue chain is MKTHYFLLVMICFLFSQMEPGVGILTSLGRRTDQYKCLQHGGFCLRSSCPSNTKLQGTCKPDKPNCCKS.

The first 21 residues, 1 to 21 (MKTHYFLLVMICFLFSQMEPG), serve as a signal peptide directing secretion. The propeptide occupies 22-32 (VGILTSLGRRT). Disulfide bonds link C37/C66, C44/C59, and C49/C67.

This sequence belongs to the beta-defensin family. As to quaternary structure, monomer. Homodimer. Detected in kidney.

It is found in the secreted. It localises to the membrane. In terms of biological role, has bactericidal activity. May act as a ligand for C-C chemokine receptor CCR6. Positively regulates the sperm motility and bactericidal activity in a CCR6-dependent manner. Binds to CCR6 and triggers Ca2+ mobilization in the sperm which is important for its motility. In Mus musculus (Mouse), this protein is Beta-defensin 1 (Defb1).